We begin with the raw amino-acid sequence, 142 residues long: Putative pre-16S rRNA nuclease (142 aa).

The protein belongs to the YqgF nuclease family.

The protein localises to the cytoplasm. Its function is as follows. Could be a nuclease involved in processing of the 5'-end of pre-16S rRNA. The sequence is that of Putative pre-16S rRNA nuclease from Saccharophagus degradans (strain 2-40 / ATCC 43961 / DSM 17024).